The primary structure comprises 249 residues: E3 ubiquitin-protein ligase RMA1 (249 aa).

The RING-type zinc-finger motif lies at 48-97; sequence CNICLDSVQEPVVTLCGHLFCWPCIHKWLDVQSFSTSDEYQRHRQCPVCK. A helical; Anchor for type IV membrane protein membrane pass occupies residues 231 to 248; it reads LGRIFFFFMCCVVLCLLL.

In terms of tissue distribution, ubiquitous. Highly expressed in roots.

It localises to the endoplasmic reticulum membrane. It catalyses the reaction S-ubiquitinyl-[E2 ubiquitin-conjugating enzyme]-L-cysteine + [acceptor protein]-L-lysine = [E2 ubiquitin-conjugating enzyme]-L-cysteine + N(6)-ubiquitinyl-[acceptor protein]-L-lysine.. It participates in protein modification; protein ubiquitination. Its function is as follows. E3 ubiquitin-protein ligase that promotes the ubiquitination and proteasomal degradation of aquaporin PIP2-1. Forms a ubiquitin ligase complex in cooperation with the E2 enzymes UCB8/UCB10. The polypeptide is E3 ubiquitin-protein ligase RMA1 (RMA1) (Arabidopsis thaliana (Mouse-ear cress)).